Consider the following 510-residue polypeptide: Arginine biosynthesis bifunctional protein ArgJ, mitochondrial (510 aa).

Residues 57 to 70 (TSTNEPSAATTNVP) are compositionally biased toward polar residues. The tract at residues 57 to 76 (TSTNEPSAATTNVPHPQEAP) is disordered. The substrate site is built by Thr-222, Lys-248, Thr-267, and Glu-364. Thr-267 (nucleophile) is an active-site residue.

This sequence belongs to the ArgJ family. In terms of assembly, heterodimer of an alpha and a beta chain. In terms of processing, the alpha and beta chains are autoproteolytically processed from a single precursor protein within the mitochondrion.

The protein resides in the mitochondrion matrix. The enzyme catalyses N(2)-acetyl-L-ornithine + L-glutamate = N-acetyl-L-glutamate + L-ornithine. The catalysed reaction is L-glutamate + acetyl-CoA = N-acetyl-L-glutamate + CoA + H(+). It functions in the pathway amino-acid biosynthesis; L-arginine biosynthesis; L-ornithine and N-acetyl-L-glutamate from L-glutamate and N(2)-acetyl-L-ornithine (cyclic): step 1/1. Its pathway is amino-acid biosynthesis; L-arginine biosynthesis; N(2)-acetyl-L-ornithine from L-glutamate: step 1/4. In terms of biological role, catalyzes two activities which are involved in the cyclic version of arginine biosynthesis: the synthesis of acetylglutamate from glutamate and acetyl-CoA, and of ornithine by transacetylation between acetylornithine and glutamate. The sequence is that of Arginine biosynthesis bifunctional protein ArgJ, mitochondrial from Malassezia globosa (strain ATCC MYA-4612 / CBS 7966) (Dandruff-associated fungus).